Here is a 181-residue protein sequence, read N- to C-terminus: Probable nicotinate-nucleotide adenylyltransferase (181 aa).

The protein belongs to the NadD family.

It catalyses the reaction nicotinate beta-D-ribonucleotide + ATP + H(+) = deamido-NAD(+) + diphosphate. It functions in the pathway cofactor biosynthesis; NAD(+) biosynthesis; deamido-NAD(+) from nicotinate D-ribonucleotide: step 1/1. In terms of biological role, catalyzes the reversible adenylation of nicotinate mononucleotide (NaMN) to nicotinic acid adenine dinucleotide (NaAD). The chain is Probable nicotinate-nucleotide adenylyltransferase from Campylobacter jejuni subsp. jejuni serotype O:6 (strain 81116 / NCTC 11828).